The following is a 273-amino-acid chain: Inositol monophosphatase 1 (273 aa).

Mg(2+) contacts are provided by Glu71, Asp91, Val93, and Asp94. Glu71 serves as a coordination point for substrate. Substrate is bound by residues 93–96 (VDGT), 194–196 (GSC), and Asp221. Asp221 contacts Mg(2+).

This sequence belongs to the inositol monophosphatase superfamily. The cofactor is Mg(2+). As to expression, expressed in seedlings, flowers, young and matures green fruits. Detected in roots and stems.

The enzyme catalyses a myo-inositol phosphate + H2O = myo-inositol + phosphate. The protein operates within polyol metabolism; myo-inositol biosynthesis; myo-inositol from D-glucose 6-phosphate: step 2/2. Its function is as follows. Responsible for the provision of inositol required for synthesis of phosphatidylinositol and polyphosphoinositides. The polypeptide is Inositol monophosphatase 1 (IMP1) (Solanum lycopersicum (Tomato)).